The following is a 336-amino-acid chain: GTPase Obg (336 aa).

Positions 1–159 constitute an Obg domain; that stretch reads MKFIDEATII…RRLQLELILL (159 aa). The OBG-type G domain maps to 160–333; the sequence is ADVGLLGLPN…LCRDIMLFIN (174 aa). Residues 166-173, 191-195, 213-216, 283-286, and 314-316 each bind GTP; these read GLPNVGKS, FTTLV, DIPG, NKLD, and SAM. 2 residues coordinate Mg(2+): S173 and T193.

This sequence belongs to the TRAFAC class OBG-HflX-like GTPase superfamily. OBG GTPase family. As to quaternary structure, monomer. Requires Mg(2+) as cofactor.

Its subcellular location is the cytoplasm. Functionally, an essential GTPase which binds GTP, GDP and possibly (p)ppGpp with moderate affinity, with high nucleotide exchange rates and a fairly low GTP hydrolysis rate. Plays a role in control of the cell cycle, stress response, ribosome biogenesis and in those bacteria that undergo differentiation, in morphogenesis control. The polypeptide is GTPase Obg (Baumannia cicadellinicola subsp. Homalodisca coagulata).